Here is a 330-residue protein sequence, read N- to C-terminus: DNA-directed RNA polymerase subunit alpha (330 aa).

The tract at residues 1–225 (MSDLAIPTIS…KQFAALVSHN (225 aa)) is alpha N-terminal domain (alpha-NTD). An alpha C-terminal domain (alpha-CTD) region spans residues 237–330 (VKYAIPEEKY…KKKNKGMDEA (94 aa)).

The protein belongs to the RNA polymerase alpha chain family. Homodimer. The RNAP catalytic core consists of 2 alpha, 1 beta, 1 beta' and 1 omega subunit. When a sigma factor is associated with the core the holoenzyme is formed, which can initiate transcription.

The enzyme catalyses RNA(n) + a ribonucleoside 5'-triphosphate = RNA(n+1) + diphosphate. Functionally, DNA-dependent RNA polymerase catalyzes the transcription of DNA into RNA using the four ribonucleoside triphosphates as substrates. The sequence is that of DNA-directed RNA polymerase subunit alpha from Dehalococcoides mccartyi (strain ATCC BAA-2266 / KCTC 15142 / 195) (Dehalococcoides ethenogenes (strain 195)).